An 886-amino-acid polypeptide reads, in one-letter code: DNA repair and recombination protein RAD54B (886 aa).

Over residues 1–12 the composition is skewed to polar residues; it reads MRRSAAPSQVQG. The interval 1–95 is disordered; that stretch reads MRRSAAPSQV…ASKEITESKA (95 aa). The residue at position 14 (serine 14) is a Phosphoserine. Residues 47 to 62 show a composition bias toward polar residues; sequence AEQSQNDPGVCSSNPC. Basic and acidic residues-rich tracts occupy residues 67 to 76 and 86 to 95; these read IPREVGDGTR and ASKEITESKA. Residues 291–458 form the Helicase ATP-binding domain; sequence GMRAVGKCGA…FALVDFVNPG (168 aa). An ATP-binding site is contributed by 304–311; it reads DEMGLGKT. The short motif at 409–412 is the DEGH box element; it reads DEGH. The Helicase C-terminal domain maps to 627–788; it reads KLLAVIHELR…HIQFSVEELK (162 aa).

The protein belongs to the SNF2/RAD54 helicase family. In terms of assembly, interacts with RAD51 through the NH2-terminal domain.

It is found in the nucleus. In terms of biological role, involved in DNA repair and mitotic recombination. May play an active role in recombination processes in concert with other members of the RAD52 epistasis group. The polypeptide is DNA repair and recombination protein RAD54B (Rad54b) (Mus musculus (Mouse)).